Reading from the N-terminus, the 119-residue chain is Large ribosomal subunit protein bL20 (119 aa).

The protein belongs to the bacterial ribosomal protein bL20 family.

Binds directly to 23S ribosomal RNA and is necessary for the in vitro assembly process of the 50S ribosomal subunit. It is not involved in the protein synthesizing functions of that subunit. This chain is Large ribosomal subunit protein bL20, found in Xanthomonas oryzae pv. oryzae (strain KACC10331 / KXO85).